We begin with the raw amino-acid sequence, 227 residues long: tRNA (guanine-N(1)-)-methyltransferase (227 aa).

Residues glycine 112 and 132–137 contribute to the S-adenosyl-L-methionine site; that span reads LGDFVL.

It belongs to the RNA methyltransferase TrmD family. In terms of assembly, homodimer.

The protein resides in the cytoplasm. The catalysed reaction is guanosine(37) in tRNA + S-adenosyl-L-methionine = N(1)-methylguanosine(37) in tRNA + S-adenosyl-L-homocysteine + H(+). Specifically methylates guanosine-37 in various tRNAs. The protein is tRNA (guanine-N(1)-)-methyltransferase of Gloeobacter violaceus (strain ATCC 29082 / PCC 7421).